A 1133-amino-acid polypeptide reads, in one-letter code: ATP-dependent DNA helicase homolog MER3 (1133 aa).

The region spanning 34 to 229 (PLCFHSDINM…WLKVPTAGIK (196 aa)) is the Helicase ATP-binding domain. 47–54 (APTGSGKT) provides a ligand contact to ATP. Positions 165-168 (DEVH) match the DEVH box motif. The Helicase C-terminal domain occupies 263–460 (YIYDILMQYS…CLIEHLTAEI (198 aa)). The SEC63 domain occupies 536-847 (EPGRLMTKYY…FEEYIGIDLH (312 aa)). The interval 878-919 (ACIADDDNPVTSGPSNRKDKKDDMPSFKLIDDDSEEEKEPYV) is disordered. A compositionally biased stretch (basic and acidic residues) spans 893–908 (NRKDKKDDMPSFKLID). The span at 909–919 (DDSEEEKEPYV) shows a compositional bias: acidic residues.

This sequence belongs to the helicase family. SKI2 subfamily. In terms of tissue distribution, expressed in meiocytes during meiosis.

The protein localises to the nucleus. It carries out the reaction Couples ATP hydrolysis with the unwinding of duplex DNA by translocating in the 3'-5' direction.. It catalyses the reaction ATP + H2O = ADP + phosphate + H(+). Its function is as follows. DNA helicase required for crossover formation, complete synapsis of homologous chromosomes and bivalent formation during meiosis. Is specific to recombination events resulting in interference-sensitive crossovers (class I meiotic crossover). This chain is ATP-dependent DNA helicase homolog MER3, found in Arabidopsis thaliana (Mouse-ear cress).